Consider the following 40-residue polypeptide: Photosystem II reaction center protein J (40 aa).

The helical transmembrane segment at 8–28 (IPLWIIGTVTGLLVIGLIGIF) threads the bilayer.

It belongs to the PsbJ family. PSII is composed of 1 copy each of membrane proteins PsbA, PsbB, PsbC, PsbD, PsbE, PsbF, PsbH, PsbI, PsbJ, PsbK, PsbL, PsbM, PsbT, PsbX, PsbY, PsbZ, Psb30/Ycf12, at least 3 peripheral proteins of the oxygen-evolving complex and a large number of cofactors. It forms dimeric complexes.

It localises to the plastid. The protein resides in the chloroplast thylakoid membrane. In terms of biological role, one of the components of the core complex of photosystem II (PSII). PSII is a light-driven water:plastoquinone oxidoreductase that uses light energy to abstract electrons from H(2)O, generating O(2) and a proton gradient subsequently used for ATP formation. It consists of a core antenna complex that captures photons, and an electron transfer chain that converts photonic excitation into a charge separation. In Ipomoea purpurea (Common morning glory), this protein is Photosystem II reaction center protein J.